Here is a 175-residue protein sequence, read N- to C-terminus: Crossover junction endodeoxyribonuclease RuvC (175 aa).

Catalysis depends on residues Asp-8, Glu-69, and Asp-141. Mg(2+)-binding residues include Asp-8, Glu-69, and Asp-141.

It belongs to the RuvC family. In terms of assembly, homodimer which binds Holliday junction (HJ) DNA. The HJ becomes 2-fold symmetrical on binding to RuvC with unstacked arms; it has a different conformation from HJ DNA in complex with RuvA. In the full resolvosome a probable DNA-RuvA(4)-RuvB(12)-RuvC(2) complex forms which resolves the HJ. The cofactor is Mg(2+).

It is found in the cytoplasm. The catalysed reaction is Endonucleolytic cleavage at a junction such as a reciprocal single-stranded crossover between two homologous DNA duplexes (Holliday junction).. In terms of biological role, the RuvA-RuvB-RuvC complex processes Holliday junction (HJ) DNA during genetic recombination and DNA repair. Endonuclease that resolves HJ intermediates. Cleaves cruciform DNA by making single-stranded nicks across the HJ at symmetrical positions within the homologous arms, yielding a 5'-phosphate and a 3'-hydroxyl group; requires a central core of homology in the junction. The consensus cleavage sequence is 5'-(A/T)TT(C/G)-3'. Cleavage occurs on the 3'-side of the TT dinucleotide at the point of strand exchange. HJ branch migration catalyzed by RuvA-RuvB allows RuvC to scan DNA until it finds its consensus sequence, where it cleaves and resolves the cruciform DNA. The chain is Crossover junction endodeoxyribonuclease RuvC from Colwellia psychrerythraea (strain 34H / ATCC BAA-681) (Vibrio psychroerythus).